The following is a 241-amino-acid chain: Ribonuclease PH (241 aa).

Residues Arg-87 and 125-127 (GTR) contribute to the phosphate site.

The protein belongs to the RNase PH family. Homohexameric ring arranged as a trimer of dimers.

The enzyme catalyses tRNA(n+1) + phosphate = tRNA(n) + a ribonucleoside 5'-diphosphate. In terms of biological role, phosphorolytic 3'-5' exoribonuclease that plays an important role in tRNA 3'-end maturation. Removes nucleotide residues following the 3'-CCA terminus of tRNAs; can also add nucleotides to the ends of RNA molecules by using nucleoside diphosphates as substrates, but this may not be physiologically important. Probably plays a role in initiation of 16S rRNA degradation (leading to ribosome degradation) during starvation. The polypeptide is Ribonuclease PH (Salinispora arenicola (strain CNS-205)).